The following is an 837-amino-acid chain: Tuftelin-interacting protein 11 (837 aa).

2 stretches are compositionally biased toward basic and acidic residues: residues 1 to 13 (MSLSHLYRDGEGH) and 44 to 64 (QTKEEATYGVWAERDSDEERP). Disordered stretches follow at residues 1 to 21 (MSLSHLYRDGEGHLDDDDDER), 34 to 73 (EFNPNRQRHWQTKEEATYGVWAERDSDEERPSFGGKRARD), and 85 to 135 (LKKG…FAGG). Residues 1 to 50 (MSLSHLYRDGEGHLDDDDDERENFEITDWDLQNEFNPNRQRHWQTKEEAT) are required for interaction with DHX15. Serine 2, serine 59, serine 95, and serine 98 each carry phosphoserine. Positions 91–100 (EEADSEDSDA) are enriched in acidic residues. A compositionally biased stretch (basic and acidic residues) spans 101–116 (EEKPVKQEDFPKDLGP). Residue serine 144 is modified to Phosphoserine. In terms of domain architecture, G-patch spans 149–195 (TKGIGQKLLQKMGYVPGRGLGKNAQGIINPIEAKQRKGKGAVGAYGS). Residues 183-236 (QRKGKGAVGAYGSERTTQSLQDFPVADSEEEAEEEFQKELSQWRKDPSGSKKKP) form a disordered region. A Phosphoserine modification is found at serine 210. Over residues 217–231 (EFQKELSQWRKDPSG) the composition is skewed to basic and acidic residues. The Nuclear localization signal motif lies at 700–705 (VKDKFN). Residues 710–734 (IMNRAVSSNVGAYMQPGARENIAYL) are required for nuclear speckle localization.

The protein belongs to the TFP11/STIP family. As to quaternary structure, identified in the spliceosome C complex. Found in the Intron Large (IL) complex, a post-mRNA release spliceosomal complex containing the excised intron, U2, U5 and U6 snRNPs, and splicing factors. Interacts with TUFT1. Interacts with DHX15; indicative for a recruitment of DHX15 to the IL complex. Interacts with GCFC2.

It localises to the cytoplasm. Its subcellular location is the nucleus. Involved in pre-mRNA splicing, specifically in spliceosome disassembly during late-stage splicing events. Intron turnover seems to proceed through reactions in two lariat-intron associated complexes termed Intron Large (IL) and Intron Small (IS). In cooperation with DHX15 seems to mediate the transition of the U2, U5 and U6 snRNP-containing IL complex to the snRNP-free IS complex leading to efficient debranching and turnover of excised introns. May play a role in the differentiation of ameloblasts and odontoblasts or in the forming of the enamel extracellular matrix. This is Tuftelin-interacting protein 11 (Tfip11) from Rattus norvegicus (Rat).